A 245-amino-acid polypeptide reads, in one-letter code: Orotidine 5'-phosphate decarboxylase (245 aa).

Residues aspartate 22, lysine 44, 71 to 80 (DLKFHDIPNT), threonine 131, arginine 192, glutamine 201, glycine 221, and arginine 222 each bind substrate. Residue lysine 73 is the Proton donor of the active site.

This sequence belongs to the OMP decarboxylase family. Type 1 subfamily. In terms of assembly, homodimer.

The enzyme catalyses orotidine 5'-phosphate + H(+) = UMP + CO2. The protein operates within pyrimidine metabolism; UMP biosynthesis via de novo pathway; UMP from orotate: step 2/2. Its function is as follows. Catalyzes the decarboxylation of orotidine 5'-monophosphate (OMP) to uridine 5'-monophosphate (UMP). The protein is Orotidine 5'-phosphate decarboxylase of Escherichia coli O6:K15:H31 (strain 536 / UPEC).